The chain runs to 644 residues: MFQDNPLLAQLKQQLHSQTPRAEGVVKATEKGFGFLEVDAQKSYFIPPPQMKKVMHGDRIIAVIHSEKDRESAEPEELVEPFLTRFVGKVQGKNDRLSIVPDHPLLKDAIPCRAARGVDHQFKEGDWAVAEMRRHPLKGDRSFYAELTQFITFGDDHFVPWWVTLARHNLEREAPNGVATEMLDEGLVRQDLTALNFVTIDSASTEDMDDALYAEALPDGKLQLTVAIADPTAWIAEGSKLDNVAKIRAFTNYLPGFNIPMLPRELSDDLCSLRAFEVRPALACRMTIAADGTIEDDIEFFAATIESKAKLVYDEVSDWLENSGNWQPENDAIAEQIRLLAQICQRRGEWRHNHALVFKDRPDYRFILGEKGEVLDIVAEPRRIANRIVEEAMIAANICAARVLRDKIGFGIYNVHMGFDPANADALAALLKTHGLHVDAQEVLTLEGFCKLRRELDAQPSGFLDSRIRRFQSFAEISTQPGPHFGLGLEAYATWTSPIRKYGDMINHRLLKAAIKGETASRPQDETTVQMTERRRLNRMAERDVGDWLYARFLKDKAGTDTRFAAEIIDISRGGMRVRLVDNGAVAFIPAPFLHAVRDELVCSQENGTVQIKGETVYKVTDVIDVTIAEVRMETRSIIARPVA.

In terms of domain architecture, RNB spans 189–516 (RQDLTALNFV…NHRLLKAAIK (328 aa)). The S1 motif domain occupies 561–643 (DTRFAAEIID…ETRSIIARPV (83 aa)).

It belongs to the RNR ribonuclease family. RNase II subfamily.

It is found in the cytoplasm. The catalysed reaction is Exonucleolytic cleavage in the 3'- to 5'-direction to yield nucleoside 5'-phosphates.. Involved in mRNA degradation. Hydrolyzes single-stranded polyribonucleotides processively in the 3' to 5' direction. The protein is Exoribonuclease 2 of Escherichia fergusonii (strain ATCC 35469 / DSM 13698 / CCUG 18766 / IAM 14443 / JCM 21226 / LMG 7866 / NBRC 102419 / NCTC 12128 / CDC 0568-73).